The following is an 862-amino-acid chain: Semaphorin-4D (862 aa).

An N-terminal signal peptide occupies residues 1 to 21; sequence MRMCTPIRGLLMALAVMFGTA. Residues 22 to 500 enclose the Sema domain; the sequence is MAFAPIPRIT…SNSGVVQAPL (479 aa). Residues 22–734 are Extracellular-facing; it reads MAFAPIPRIT…TMYLKSSDNR (713 aa). 2 N-linked (GlcNAc...) asparagine glycosylation sites follow: asparagine 49 and asparagine 77. 2 disulfide bridges follow: cysteine 97–cysteine 108 and cysteine 126–cysteine 135. N-linked (GlcNAc...) asparagine glycosylation is found at asparagine 139 and asparagine 191. 2 cysteine pairs are disulfide-bonded: cysteine 257–cysteine 370 and cysteine 281–cysteine 326. 3 N-linked (GlcNAc...) asparagine glycosylation sites follow: asparagine 329, asparagine 379, and asparagine 419. Residues 502–551 form the PSI domain; sequence FCGKHGTCEDCVLARDPYCAWSPPTATCVALHQTESPSRGLIQEMSGDAS. Cystine bridges form between cysteine 503/cysteine 520, cysteine 509/cysteine 553, cysteine 512/cysteine 529, and cysteine 576/cysteine 624. One can recognise an Ig-like C2-type domain in the interval 554-636; sequence PDKSKGSYRQ…EERVKNKTVF (83 aa). N-linked (GlcNAc...) asparagine glycans are attached at residues asparagine 613 and asparagine 632. A helical transmembrane segment spans residues 735 to 755; it reads LLMSLFLFFFVLFLCLFFYNC. At 756-862 the chain is on the cytoplasmic side; that stretch reads YKGYLPRQCL…KFADSDADGD (107 aa). Positions 794 to 837 are disordered; that stretch reads VEPGSFSQQNGEHPKPALDTGYETEQDTITSKVPTDREDSQRID. The segment covering 827-837 has biased composition (basic and acidic residues); the sequence is PTDREDSQRID. Serine 833 carries the post-translational modification Phosphoserine.

It belongs to the semaphorin family. In terms of assembly, homodimer. Interacts with PLXNB2. Interacts with PLXNB1. In terms of tissue distribution, strongly expressed in skeletal muscle, peripheral blood lymphocytes, spleen, and thymus and also expressed at lower levels in testes, brain, kidney, small intestine, prostate, heart, placenta, lung and pancreas, but not in colon and liver.

The protein resides in the cell membrane. Functionally, cell surface receptor for PLXNB1 and PLXNB2 that plays an important role in cell-cell signaling. Regulates GABAergic synapse development. Promotes the development of inhibitory synapses in a PLXNB1-dependent manner. Modulates the complexity and arborization of developing neurites in hippocampal neurons by activating PLXNB1 and interaction with PLXNB1 mediates activation of RHOA. Promotes the migration of cerebellar granule cells. Plays a role in the immune system; induces B-cells to aggregate and improves their viability (in vitro). Induces endothelial cell migration through the activation of PTK2B/PYK2, SRC, and the phosphatidylinositol 3-kinase-AKT pathway. The sequence is that of Semaphorin-4D (SEMA4D) from Homo sapiens (Human).